The primary structure comprises 118 residues: Altered inheritance of mitochondria protein 26, mitochondrial (118 aa).

The next 3 membrane-spanning stretches (helical) occupy residues 7–27 (EHLL…AYFF), 41–61 (LAVT…SIPA), and 98–118 (FLFC…GLSI).

The protein resides in the mitochondrion membrane. Involved in selective mitochondria autophagy (mitophagy). The chain is Altered inheritance of mitochondria protein 26, mitochondrial (AIM26) from Saccharomyces cerevisiae (strain ATCC 204508 / S288c) (Baker's yeast).